A 296-amino-acid chain; its full sequence is Ribosomal protein L11 methyltransferase (296 aa).

Residues Thr-139, Gly-163, Asp-185, and Asn-232 each contribute to the S-adenosyl-L-methionine site.

The protein belongs to the methyltransferase superfamily. PrmA family.

It localises to the cytoplasm. It carries out the reaction L-lysyl-[protein] + 3 S-adenosyl-L-methionine = N(6),N(6),N(6)-trimethyl-L-lysyl-[protein] + 3 S-adenosyl-L-homocysteine + 3 H(+). Its function is as follows. Methylates ribosomal protein L11. The sequence is that of Ribosomal protein L11 methyltransferase from Rippkaea orientalis (strain PCC 8801 / RF-1) (Cyanothece sp. (strain PCC 8801)).